The following is a 157-amino-acid chain: Fimbrial protein Q (157 aa).

The propeptide occupies 1–6 (MNAQKG). Residue F7 is modified to N-methylphenylalanine. A disulfide bridge links C136 with C155.

The protein belongs to the N-Me-Phe pilin family. In terms of assembly, the pili are polar flexible filaments of about 5.4 nanometers diameter and 2.5 micrometers average length; they consist of only a single polypeptide chain arranged in a helical configuration of five subunits per turn in the assembled pilus.

It is found in the fimbrium. The sequence is that of Fimbrial protein Q (tfpQ) from Moraxella bovis.